We begin with the raw amino-acid sequence, 327 residues long: MFNDIPVFDYEDIQLIPNKCIITSRSQADTSVTLGKYQFKLPVIPANMQTIIDETIAEQLAKEGYFYIMHRFDEDSRKPFIKRMHEQGLIASISVGVKAYEYEFVTSLKEDTPEFITIDIAHGHANSVIDMIKHIKTELPETFVIAGNVGTPEAVRELENAGADATKVGIGPGKVCITKVKTGFGTGGWQLAALRWCAKAARKSIIADGGIRTHGDIAKSIRFGASMVMIGSLFAGHIESPGKTVEVDGETFKEYYGSASEYQKGEHKNVEGKKILLPTKGHLSDTLTEMQQDLQSSISYAGGKDLDSLRHVDYVIVKNSIWNGDSI.

The active-site Thioimidate intermediate is Cys176. 205-228 is a binding site for NADP(+); sequence IIADGGIRTHGDIAKSIRFGASMV.

This sequence belongs to the IMPDH/GMPR family. GuaC type 2 subfamily.

The enzyme catalyses IMP + NH4(+) + NADP(+) = GMP + NADPH + 2 H(+). In terms of biological role, catalyzes the irreversible NADPH-dependent deamination of GMP to IMP. It functions in the conversion of nucleobase, nucleoside and nucleotide derivatives of G to A nucleotides, and in maintaining the intracellular balance of A and G nucleotides. This Streptococcus pyogenes serotype M5 (strain Manfredo) protein is GMP reductase.